A 32-amino-acid chain; its full sequence is Cytochrome b6-f complex subunit 7 (32 aa).

Residues 9–27 traverse the membrane as a helical segment; the sequence is AAVFWVLIPVGLLGGAILL.

It belongs to the PetM family. In terms of assembly, the 4 large subunits of the cytochrome b6-f complex are cytochrome b6, subunit IV (17 kDa polypeptide, PetD), cytochrome f and the Rieske protein, while the 4 small subunits are PetG, PetL, PetM and PetN. The complex functions as a dimer.

It is found in the cellular thylakoid membrane. Its function is as follows. Component of the cytochrome b6-f complex, which mediates electron transfer between photosystem II (PSII) and photosystem I (PSI), cyclic electron flow around PSI, and state transitions. This chain is Cytochrome b6-f complex subunit 7, found in Prochlorococcus marinus (strain MIT 9211).